The chain runs to 158 residues: GTP-dependent dephospho-CoA kinase (158 aa).

GTP-binding residues include D35, V36, D54, K56, E109, and D132.

It belongs to the GTP-dependent DPCK family.

The enzyme catalyses 3'-dephospho-CoA + GTP = GDP + CoA + H(+). It functions in the pathway cofactor biosynthesis; coenzyme A biosynthesis. Its function is as follows. Catalyzes the GTP-dependent phosphorylation of the 3'-hydroxyl group of dephosphocoenzyme A to form coenzyme A (CoA). The polypeptide is GTP-dependent dephospho-CoA kinase (Methanococcus maripaludis (strain DSM 14266 / JCM 13030 / NBRC 101832 / S2 / LL)).